A 386-amino-acid polypeptide reads, in one-letter code: Patatin-T5 (386 aa).

The first 23 residues, 1 to 23, serve as a signal peptide directing secretion; the sequence is MATTNSFTILIFMILATTSSTFA. Residues 32–229 form the PNPLA domain; sequence LSIDGGGIKG…TVDDPALLSI (198 aa). The GXGXXG signature appears at 36–41; it reads GGGIKG. Asn60 carries an N-linked (GlcNAc...) asparagine glycan. The GXSXG signature appears at 75–79; sequence GTSTG. Residue Ser77 is the Nucleophile of the active site. N-linked (GlcNAc...) asparagine glycans are attached at residues Asn90 and Asn202. Asp215 serves as the catalytic Proton acceptor. A DGA/G motif is present at residues 215–217; the sequence is DGA.

Belongs to the patatin family. N-glycosylated. As to expression, tuber and stolon.

Its subcellular location is the vacuole. In terms of biological role, probable lipolytic acyl hydrolase (LAH), an activity which is thought to be involved in the response of tubers to pathogens. The protein is Patatin-T5 of Solanum tuberosum (Potato).